The following is a 33-amino-acid chain: uncharacterized protein (33 aa).

Its subcellular location is the cytoplasm. It localises to the nucleus. This is an uncharacterized protein from Schizosaccharomyces pombe (strain 972 / ATCC 24843) (Fission yeast).